Reading from the N-terminus, the 317-residue chain is Adenine deaminase (317 aa).

Residues His14, His16, and His194 each coordinate Zn(2+). The Proton donor role is filled by Glu197. Residue Asp275 coordinates Zn(2+). Asp276 is a binding site for substrate.

It belongs to the metallo-dependent hydrolases superfamily. Adenosine and AMP deaminases family. Adenine deaminase type 2 subfamily. The cofactor is Zn(2+).

The catalysed reaction is adenine + H2O + H(+) = hypoxanthine + NH4(+). Catalyzes the hydrolytic deamination of adenine to hypoxanthine. Plays an important role in the purine salvage pathway and in nitrogen catabolism. The chain is Adenine deaminase from Bordetella bronchiseptica (strain ATCC BAA-588 / NCTC 13252 / RB50) (Alcaligenes bronchisepticus).